A 192-amino-acid chain; its full sequence is Transcription termination/antitermination protein NusG (192 aa).

The KOW domain maps to 140 to 168 (VGEIVTVTDGPFETFMGTVEEIDQEKNRL).

This sequence belongs to the NusG family.

In terms of biological role, participates in transcription elongation, termination and antitermination. The sequence is that of Transcription termination/antitermination protein NusG from Rickettsia conorii (strain ATCC VR-613 / Malish 7).